Reading from the N-terminus, the 57-residue chain is UPF0391 membrane protein RPB_2024 (57 aa).

2 helical membrane-spanning segments follow: residues 4–24 (WVVTFLVVALIAGLLGFGGIA) and 30–50 (IAKVIFFIAIVLFLVSAVVGL).

It belongs to the UPF0391 family.

The protein localises to the cell membrane. This Rhodopseudomonas palustris (strain HaA2) protein is UPF0391 membrane protein RPB_2024.